Consider the following 344-residue polypeptide: Phenylalanine--tRNA ligase alpha subunit (344 aa).

Position 255 (glutamate 255) interacts with Mg(2+).

Belongs to the class-II aminoacyl-tRNA synthetase family. Phe-tRNA synthetase alpha subunit type 1 subfamily. As to quaternary structure, tetramer of two alpha and two beta subunits. The cofactor is Mg(2+).

It is found in the cytoplasm. It carries out the reaction tRNA(Phe) + L-phenylalanine + ATP = L-phenylalanyl-tRNA(Phe) + AMP + diphosphate + H(+). This chain is Phenylalanine--tRNA ligase alpha subunit, found in Persephonella marina (strain DSM 14350 / EX-H1).